The following is a 681-amino-acid chain: Epithelial splicing regulatory protein 1 (681 aa).

3 RRM domains span residues 225 to 302 (TVVR…KATG), 326 to 406 (VIVR…RSTA), and 445 to 525 (DCIR…QCSA). At S543 the chain carries Phosphoserine. The residue at position 582 (R582) is an Omega-N-methylarginine.

This sequence belongs to the ESRP family. As to expression, epithelial cell-specific.

It localises to the nucleus. In terms of biological role, mRNA splicing factor that regulates the formation of epithelial cell-specific isoforms. Specifically regulates the expression of FGFR2-IIIb, an epithelial cell-specific isoform of FGFR2. Also regulates the splicing of CD44, CTNND1, ENAH, 3 transcripts that undergo changes in splicing during the epithelial-to-mesenchymal transition (EMT). Acts by directly binding specific sequences in mRNAs. Binds the GU-rich sequence motifs in the ISE/ISS-3, a cis-element regulatory region present in the mRNA of FGFR2. Regulates splicing and expression of genes involved in inner ear development, auditory hair cell differentiation, and cell fate specification in the cochlear epithelium. In Homo sapiens (Human), this protein is Epithelial splicing regulatory protein 1 (ESRP1).